A 213-amino-acid polypeptide reads, in one-letter code: MLGSPPDMGKPYRPKDHYFQKAKQEGLRARSAFKVDELIKRFPMVKKGHVVLDLGAAPGGFLQILADAVGPKGRVIGVDIVAIRPFSQPFVQTAVLDVLADDFDAKLTELHAGPFDAVISDMAPKTSGIKATDEARSLRLAGKALELAAARGRPGSSFVAKVFMGRDFEDFRNQIRALFEEVKVVRPEATRGASMEVYLVGLRRRAPEAPEAN.

Gly-59, Phe-61, Asp-79, Asp-97, and Asp-121 together coordinate S-adenosyl-L-methionine. Lys-161 functions as the Proton acceptor in the catalytic mechanism.

The protein belongs to the class I-like SAM-binding methyltransferase superfamily. RNA methyltransferase RlmE family.

It is found in the cytoplasm. The catalysed reaction is uridine(2552) in 23S rRNA + S-adenosyl-L-methionine = 2'-O-methyluridine(2552) in 23S rRNA + S-adenosyl-L-homocysteine + H(+). Functionally, specifically methylates the uridine in position 2552 of 23S rRNA at the 2'-O position of the ribose in the fully assembled 50S ribosomal subunit. The chain is Ribosomal RNA large subunit methyltransferase E from Myxococcus xanthus (strain DK1622).